The primary structure comprises 269 residues: Chromosome-partitioning protein Spo0J (269 aa).

Residues 1–20 (MSRKPSGLGRGLEALLPKTG) form a stimulates ATPase activity of Soj by 8% region. A DNA-binding region (H-T-H motif) is located at residues 137–156 (QEEVARRVGKARSTVANALR). A required for DNA-binding; may be responsible for dimerization region spans residues 223-269 (PSPLSLELSRHLGLPVRVVGGKKGKVVIQYRSLEELEALLRRLGYQA).

It belongs to the ParB family. Homodimer, probably via the C-terminal 46 residues. Dimerization of the N-terminal H-T-H region may require DNA-binding. Probably interacts with ATPase Soj.

In terms of biological role, probably involved in chromosome partitioning. Binds to a plasmid centromere-like site parS. Stimulates the ATPase activity 10-fold of Soj; the first 20 residues may be responsible. In Thermus thermophilus (strain ATCC BAA-163 / DSM 7039 / HB27), this protein is Chromosome-partitioning protein Spo0J (spo0C).